The primary structure comprises 499 residues: Centrosomal protein of 57 kDa (499 aa).

Residues 1–35 (MAAASVSETSASQFSNILAEPSKSNGSMVRHSSSP) show a composition bias toward polar residues. Residues 1–58 (MAAASVSETSASQFSNILAEPSKSNGSMVRHSSSPYVVYPPDKPFLNSDLRRSPNKPT) are disordered. Ser-53 is modified (phosphoserine). A centrosome localization domain (CLD) region spans residues 58–239 (TFAYPESNSR…KAAQLQTGLE (182 aa)). Positions 63 to 241 (ESNSRAIFSA…AQLQTGLEVN (179 aa)) form a coiled coil. Residues 277–490 (AVQPHYRLCL…KDMQSIQNSL (214 aa)) are mediates interaction with microtubules. Disordered regions lie at residues 334–357 (KQVS…SVNE) and 431–476 (KQKK…SRKN). The segment covering 346-357 (SATPPSSSSVNE) has biased composition (low complexity). A coiled-coil region spans residues 389 to 450 (TVELKDNLEC…KTLDEEGNSS (62 aa)). Residues 431-444 (KQKKELKATRKTLD) show a composition bias toward basic and acidic residues. A compositionally biased stretch (low complexity) spans 449–459 (SSSRSTTTGTT). The span at 460–474 (NKKDFAKPRPGEKSR) shows a compositional bias: basic and acidic residues.

This sequence belongs to the translokin family. In terms of assembly, homodimer and homooligomer. Interacts with FGF2 and RAP80. Does not interact with FGF1 or FGF2 isoform 24 kDa. Interacts with microtubules.

Its subcellular location is the nucleus. It is found in the cytoplasm. It localises to the cytoskeleton. The protein localises to the microtubule organizing center. The protein resides in the centrosome. Its function is as follows. Centrosomal protein which may be required for microtubule attachment to centrosomes. May act by forming ring-like structures around microtubules. Mediates nuclear translocation and mitogenic activity of the internalized growth factor FGF2. The polypeptide is Centrosomal protein of 57 kDa (CEP57) (Bos taurus (Bovine)).